The primary structure comprises 364 residues: MTKKLDPPTAPSSDEDDVETSEDDSSSSEEDEPIKSLPATTAAAPAKSTAVSAATPAKSTSVSAAAPSKSTAVSAAADSDSGSESETDSDSESTDPPKSGSGKTIASKKKDDPSSSTATLALPAVKSGAKRAASEAATTSTKRVKKDEESVKKPALFQRLWSDDDEISMLQGMIDYHADTGKSPSADTNAFYEFQKKSISFEVSKSQFSDKVRSLRKKYRAKEGKDEPRFVKAHDKKAFELSKFIWGPKGIALDSNAKSNGVSKKSASKTKEKLDSVKQDLAFVGVSSTNGDDWFEKSSLARMIAGSGIDEYYVRQKWSSFTLETKKIVEEKFQLMQAKELEAMLDKSVRLTDLTSYFVDASKN.

The segment at 1 to 149 (MTKKLDPPTA…STKRVKKDEE (149 aa)) is disordered. Over residues 13–32 (SDEDDVETSEDDSSSSEEDE) the composition is skewed to acidic residues. Residues 39-80 (ATTAAAPAKSTAVSAATPAKSTSVSAAAPSKSTAVSAAADSD) show a composition bias toward low complexity. The span at 81-93 (SGSESETDSDSES) shows a compositional bias: acidic residues.

The protein belongs to the GeBP family.

In Arabidopsis thaliana (Mouse-ear cress), this protein is Probable transcription factor At4g00390.